The sequence spans 296 residues: Protease HtpX homolog (296 aa).

Helical transmembrane passes span 14–34 (VVLL…VGYL) and 39–59 (YQFG…SMIF). Residue His143 participates in Zn(2+) binding. Glu144 is an active-site residue. A Zn(2+)-binding site is contributed by His147. 2 consecutive transmembrane segments (helical) span residues 158-178 (IAVA…RMLF) and 195-215 (ILVL…ASLV). Residue Glu224 participates in Zn(2+) binding.

The protein belongs to the peptidase M48B family. The cofactor is Zn(2+).

It is found in the cell membrane. This is Protease HtpX homolog from Streptococcus agalactiae serotype Ia (strain ATCC 27591 / A909 / CDC SS700).